A 258-amino-acid chain; its full sequence is Trans-aconitate 2-methyltransferase (258 aa).

This sequence belongs to the methyltransferase superfamily. Tam family.

Its subcellular location is the cytoplasm. The catalysed reaction is trans-aconitate + S-adenosyl-L-methionine = (E)-3-(methoxycarbonyl)pent-2-enedioate + S-adenosyl-L-homocysteine. Its function is as follows. Catalyzes the S-adenosylmethionine monomethyl esterification of trans-aconitate. The polypeptide is Trans-aconitate 2-methyltransferase (Yersinia pestis bv. Antiqua (strain Antiqua)).